We begin with the raw amino-acid sequence, 545 residues long: Membrane protein insertase YidC (545 aa).

Residues 8-28 (ILLATVLSVGILILWQVIFPK) form a helical membrane-spanning segment. Residues 31 to 69 (PPKPAPTPAAEVAKPAAPAAPAPGAAAPAVPAPPPDAPE) form a disordered region. Over residues 38-59 (PAAEVAKPAAPAAPAPGAAAPA) the composition is skewed to low complexity. A run of 5 helical transmembrane segments spans residues 325-345 (IDYG…LYVM), 355-375 (WGVA…PLTY), 421-441 (LGGC…YAAL), 458-478 (LTAH…SFVM), and 497-517 (FFPG…TLYI).

The protein belongs to the OXA1/ALB3/YidC family. Type 1 subfamily. In terms of assembly, interacts with the Sec translocase complex via SecD. Specifically interacts with transmembrane segments of nascent integral membrane proteins during membrane integration.

The protein resides in the cell inner membrane. Required for the insertion and/or proper folding and/or complex formation of integral membrane proteins into the membrane. Involved in integration of membrane proteins that insert both dependently and independently of the Sec translocase complex, as well as at least some lipoproteins. Aids folding of multispanning membrane proteins. The protein is Membrane protein insertase YidC of Anaeromyxobacter dehalogenans (strain 2CP-C).